The primary structure comprises 153 residues: Transcription antitermination protein NusB (153 aa).

This sequence belongs to the NusB family.

In terms of biological role, involved in transcription antitermination. Required for transcription of ribosomal RNA (rRNA) genes. Binds specifically to the boxA antiterminator sequence of the ribosomal RNA (rrn) operons. The protein is Transcription antitermination protein NusB of Beutenbergia cavernae (strain ATCC BAA-8 / DSM 12333 / CCUG 43141 / JCM 11478 / NBRC 16432 / NCIMB 13614 / HKI 0122).